We begin with the raw amino-acid sequence, 517 residues long: Urethanase (517 aa).

Residues lysine 98 and serine 173 each act as charge relay system in the active site. The Acyl-ester intermediate role is filled by serine 197.

The protein belongs to the amidase family. In terms of assembly, homooctamer.

The catalysed reaction is urethane + H2O + H(+) = ethanol + NH4(+) + CO2. Exhibits poor salt tolerance but excellent tolerance to low concentrations of ethanol. EDTA has almost no impact on activity. Activity is increased in the presence of Ca(2+), Mg(2+) and Co(3+) and inhibited in the presence of Al(3+), Zn(2+) and Cu(2+). In terms of biological role, hydrolase that can catalyze the degradation of ethyl carbamate (also called urethane), a probable human carcinogen widely found in alcoholic beverages. Can also use methyl carbamate, butyl carbamate, acetamide and urea. Also catalyzes the enantioselective hydrolysis of 2-phenylpropionamide, alpha-chlorophenylacetamide, 2-methyl-3-phenylpropionamide and alpha-methoxyphenylacetamide to the corresponding acids. Is inactive on benzamide and L-glutamine. In Rhizobium radiobacter (Agrobacterium tumefaciens), this protein is Urethanase.